Consider the following 374-residue polypeptide: Cell wall integrity and stress response component 1 (374 aa).

The first 29 residues, 1–29 (MVFLNSSPFKGRLLFFVYLLIISTRLVAA), serve as a signal peptide directing secretion. The Extracellular segment spans residues 30–292 (DMNTQYGCYL…SNHTSLNAGA (263 aa)). The 89-residue stretch at 31 to 119 (MNTQYGCYLV…DLYWSVYLTG (89 aa)) folds into the WSC domain. Residues 132–236 (VSSTTSSSSS…SSSSSSRPSS (105 aa)) are disordered. N278 and N284 each carry an N-linked (GlcNAc...) asparagine glycan. The helical transmembrane segment at 293–313 (IVGIVIGCVAFAVVMALCIFL) threads the bilayer. The Cytoplasmic segment spans residues 314-374 (YFYFRRFKIR…RKILRVTNLN (61 aa)). S354 carries the post-translational modification Phosphoserine.

In terms of processing, O-mannosylated.

The protein localises to the membrane. This chain is Cell wall integrity and stress response component 1 (wsc1), found in Schizosaccharomyces pombe (strain 972 / ATCC 24843) (Fission yeast).